Here is a 202-residue protein sequence, read N- to C-terminus: Orotate phosphoribosyltransferase (202 aa).

5-phospho-alpha-D-ribose 1-diphosphate is bound at residue 113–121; the sequence is EDIITTGGS. Orotate is bound by residues Thr-117 and Arg-145.

The protein belongs to the purine/pyrimidine phosphoribosyltransferase family. PyrE subfamily. In terms of assembly, homodimer. Mg(2+) serves as cofactor.

It catalyses the reaction orotidine 5'-phosphate + diphosphate = orotate + 5-phospho-alpha-D-ribose 1-diphosphate. Its pathway is pyrimidine metabolism; UMP biosynthesis via de novo pathway; UMP from orotate: step 1/2. Its function is as follows. Catalyzes the transfer of a ribosyl phosphate group from 5-phosphoribose 1-diphosphate to orotate, leading to the formation of orotidine monophosphate (OMP). The polypeptide is Orotate phosphoribosyltransferase (Sulfurimonas denitrificans (strain ATCC 33889 / DSM 1251) (Thiomicrospira denitrificans (strain ATCC 33889 / DSM 1251))).